The chain runs to 434 residues: GTPase Obg (434 aa).

The region spanning 1–158 (MFLDTAKIKV…RELQLELKIL (158 aa)) is the Obg domain. One can recognise an OBG-type G domain in the interval 159–336 (ADVGLVGFPS…LLDATAELLD (178 aa)). GTP contacts are provided by residues 165–172 (GFPSVGKS), 190–194 (FTTIV), 212–215 (DLPG), 282–285 (NKMD), and 317–319 (SGL). Residues Ser-172 and Thr-192 each contribute to the Mg(2+) site. The OCT domain maps to 356 to 434 (GFDEEEKAFE…IGKFEFEFVD (79 aa)).

It belongs to the TRAFAC class OBG-HflX-like GTPase superfamily. OBG GTPase family. As to quaternary structure, monomer. Mg(2+) serves as cofactor.

It is found in the cytoplasm. Functionally, an essential GTPase which binds GTP, GDP and possibly (p)ppGpp with moderate affinity, with high nucleotide exchange rates and a fairly low GTP hydrolysis rate. Plays a role in control of the cell cycle, stress response, ribosome biogenesis and in those bacteria that undergo differentiation, in morphogenesis control. The chain is GTPase Obg from Streptococcus pneumoniae (strain ATCC 700669 / Spain 23F-1).